The chain runs to 323 residues: MTKSAKIGVLLANLGTPDSPTPKSISRYLWQFLTDPRVVDLPRCKWYPLLKAIILPLRSKRIAKNYQAIWTEQGSPLLAISRQQKDALQAYLDTQNINAQVEIAMTYGNPSIQSTVKNLLKNQVERIIVLPLYPQYSSSTTGAVFDAFANALKEERGLVPFDFIHSYHIDENYINALANSIKVRLKSDEFLLFSYHGIPLRYEKMGDYYREHCKQTTIAVVNKLGLTENQWGMTFQSRFGREEWLQPYTDKFLESAATQNIQKIAVICPGFSVDCLETIEEIDKENRENFLTNGGQSYQYIPALNVEHTHIEMMGKLILEKLA.

2 residues coordinate Fe cation: histidine 196 and glutamate 277.

This sequence belongs to the ferrochelatase family.

It is found in the cytoplasm. It carries out the reaction heme b + 2 H(+) = protoporphyrin IX + Fe(2+). Its pathway is porphyrin-containing compound metabolism; protoheme biosynthesis; protoheme from protoporphyrin-IX: step 1/1. Functionally, catalyzes the ferrous insertion into protoporphyrin IX. In Haemophilus influenzae (strain 86-028NP), this protein is Ferrochelatase.